Consider the following 345-residue polypeptide: Delta(1)-pyrroline-2-carboxylate reductase (345 aa).

Residue serine 47 is the Charge relay system of the active site. The Proton donor role is filled by histidine 48. Substrate is bound at residue arginine 52. Position 121–125 (121–125) interacts with NADP(+); sequence HFSAL. Threonine 161 contributes to the substrate binding site. An NADP(+)-binding site is contributed by 179-181; it reads DFA. 187–188 provides a ligand contact to substrate; it reads RG. Catalysis depends on glutamate 189, which acts as the Charge relay system. Residues 230 to 231 and 305 to 311 contribute to the NADP(+) site; these read HK and RLPSGRR.

This sequence belongs to the LDH2/MDH2 oxidoreductase family. Homodimer.

The enzyme catalyses L-proline + NAD(+) = 1-pyrroline-2-carboxylate + NADH + H(+). It carries out the reaction L-proline + NADP(+) = 1-pyrroline-2-carboxylate + NADPH + H(+). Catalyzes the reduction of Delta(1)-pyrroline-2-carboxylate (Pyr2C) to L-proline, using NADPH as the electron donor. Is likely involved in a degradation pathway that converts trans-3-hydroxy-L-proline (t3LHyp) to L-proline, which would allow A.tumefaciens to grow on t3LHyp as a sole carbon source. This is Delta(1)-pyrroline-2-carboxylate reductase from Agrobacterium fabrum (strain C58 / ATCC 33970) (Agrobacterium tumefaciens (strain C58)).